We begin with the raw amino-acid sequence, 276 residues long: Putative pyridoxine kinase (276 aa).

N139 serves as a coordination point for ATP. E142 is a Mg(2+) binding site. ATP contacts are provided by residues 176-180 (KGGKA), D188, G213, and K238.

It belongs to the ThiD family.

It carries out the reaction pyridoxal + ATP = pyridoxal 5'-phosphate + ADP + H(+). In terms of biological role, phosphorylates B6 vitamers; functions in a salvage pathway. Uses pyridoxal, pyridoxine, and pyridoxamine as substrates. The chain is Putative pyridoxine kinase (pdxK) from Staphylococcus epidermidis (strain ATCC 35984 / DSM 28319 / BCRC 17069 / CCUG 31568 / BM 3577 / RP62A).